A 362-amino-acid chain; its full sequence is Transcriptional repressor PifC (362 aa).

Its function is as follows. Transcription repression of its own gene by binding to the PIF operator (pifO) and replication initiation from the primary origin (ori-1). Transcriptional repressor of the pifA and pifB. The protein is Transcriptional repressor PifC (pifC) of Escherichia coli (strain K12).